The chain runs to 43 residues: Protein PsbN (43 aa).

Residues 4-24 (AIVLSISMAAVVVAITGISIY) traverse the membrane as a helical segment.

This sequence belongs to the PsbN family.

Its subcellular location is the cellular thylakoid membrane. Functionally, may play a role in photosystem I and II biogenesis. This chain is Protein PsbN, found in Nostoc punctiforme (strain ATCC 29133 / PCC 73102).